The primary structure comprises 96 residues: Small ribosomal subunit protein bS6 (96 aa).

It belongs to the bacterial ribosomal protein bS6 family.

Its function is as follows. Binds together with bS18 to 16S ribosomal RNA. The polypeptide is Small ribosomal subunit protein bS6 (Natranaerobius thermophilus (strain ATCC BAA-1301 / DSM 18059 / JW/NM-WN-LF)).